Reading from the N-terminus, the 483-residue chain is Triacylglycerol lipase ptl3 (483 aa).

Residues 141–340 (LILSGGGTFG…DNDIPHAKLT (200 aa)) enclose the PNPLA domain. Residues 145 to 150 (GGGTFG) carry the GXGXXG motif. Residues 172 to 176 (GSSAG) carry the GXSXG motif. Ser-174 acts as the Nucleophile in catalysis. Asp-327 (proton acceptor) is an active-site residue.

It is found in the cytoplasm. The protein resides in the lipid droplet. It catalyses the reaction a triacylglycerol + H2O = a diacylglycerol + a fatty acid + H(+). Functionally, lipid particle-localized triacylglycerol (TAG) lipase. The lipid droplet/particle is a lipid storage compartment which serves as a depot of energy and building blocks for membrane lipid biosynthesis. Involved in the mobilization of the non-polar storage lipids triacylglycerols (TAGs) from lipid particles by hydrolysis of TAGs, releasing and supplying specific fatty acids to the appropriate metabolic pathways. The polypeptide is Triacylglycerol lipase ptl3 (ptl3) (Schizosaccharomyces pombe (strain 972 / ATCC 24843) (Fission yeast)).